Reading from the N-terminus, the 398-residue chain is Stomatin-like protein 1 (398 aa).

Positions 6 to 10 match the Tyrosine-type lysosomal sorting signal motif; it reads GYRAL. Phosphoserine is present on S28. A helical; Signal-anchor for type III membrane protein transmembrane segment spans residues 58-78; the sequence is LISFLGFLLLLVTFPISGWFA. Topologically, residues 79 to 398 are cytoplasmic; sequence LKIVPTYERM…KLEAVLRALK (320 aa). One can recognise an SCP2 domain in the interval 287–398; the sequence is KQPLAEGLLT…KLEAVLRALK (112 aa).

This sequence belongs to the band 7/mec-2 family. As to quaternary structure, interacts with STOM; may redistribute STOM from the plasma membrane to late endosomes. Interacts with FBXW7 isoform 3 and CDK2. As to expression, ubiquitously expressed at low levels. Expression is highest in brain.

It is found in the membrane. The protein localises to the late endosome membrane. It localises to the membrane raft. The protein resides in the cell membrane. Its subcellular location is the cytoplasmic vesicle. Functionally, may play a role in cholesterol transfer to late endosomes. May play a role in modulating membrane acid-sensing ion channels. Can specifically inhibit proton-gated current of ASIC1 isoform 1. Can increase inactivation speed of ASIC3. May be involved in regulation of proton sensing in dorsal root ganglions. May play a role in protecting FBXW7 isoform 3 from degradation. The chain is Stomatin-like protein 1 (STOML1) from Homo sapiens (Human).